The sequence spans 118 residues: Cycloviolacin-O11 (118 aa).

An N-terminal signal peptide occupies residues 1-22 (MEMKNMVVGLFLIAAFALPALA). A propeptide spanning residues 23-84 (TSFEKDFITH…THSNSINALG (62 aa)) is cleaved from the precursor. A cross-link (cyclopeptide (Gly-Asn)) is located at residues 85–115 (GTLPCGESCVWIPCISAVVGCSCKSKVCYKN). 3 cysteine pairs are disulfide-bonded: C89/C105, C93/C107, and C98/C112. The propeptide occupies 116 to 118 (SLA).

Post-translationally, cycloviolacin-O11 is a cyclic peptide. In terms of tissue distribution, expressed in leaves, petals and petioles but not in roots and runners (at protein level).

Probably participates in a plant defense mechanism. This Viola odorata (Sweet violet) protein is Cycloviolacin-O11 (Voc2).